The primary structure comprises 338 residues: 1-aminocyclopropane-1-carboxylate deaminase (338 aa).

K51 carries the N6-(pyridoxal phosphate)lysine modification. Catalysis depends on S78, which acts as the Nucleophile.

It belongs to the ACC deaminase/D-cysteine desulfhydrase family. Homotrimer. Requires pyridoxal 5'-phosphate as cofactor.

The enzyme catalyses 1-aminocyclopropane-1-carboxylate + H2O = 2-oxobutanoate + NH4(+). In terms of biological role, catalyzes a cyclopropane ring-opening reaction, the irreversible conversion of 1-aminocyclopropane-1-carboxylate (ACC) to ammonia and alpha-ketobutyrate. Allows growth on ACC as a nitrogen source. This chain is 1-aminocyclopropane-1-carboxylate deaminase, found in Burkholderia ambifaria (strain ATCC BAA-244 / DSM 16087 / CCUG 44356 / LMG 19182 / AMMD) (Burkholderia cepacia (strain AMMD)).